A 78-amino-acid chain; its full sequence is Acyl carrier protein (78 aa).

One can recognise a Carrier domain in the interval 2–77 (STIEERVKKI…AAIDYVTSHQ (76 aa)). Residue Ser-37 is modified to O-(pantetheine 4'-phosphoryl)serine.

This sequence belongs to the acyl carrier protein (ACP) family. In terms of processing, 4'-phosphopantetheine is transferred from CoA to a specific serine of apo-ACP by AcpS. This modification is essential for activity because fatty acids are bound in thioester linkage to the sulfhydryl of the prosthetic group.

It localises to the cytoplasm. Its pathway is lipid metabolism; fatty acid biosynthesis. Functionally, carrier of the growing fatty acid chain in fatty acid biosynthesis. In Pseudomonas fluorescens (strain SBW25), this protein is Acyl carrier protein.